The primary structure comprises 285 residues: Polyamine aminopropyltransferase (285 aa).

Residues 5-241 (QDWFTESYPD…GWWSATMAGK (237 aa)) form the PABS domain. An S-methyl-5'-thioadenosine-binding site is contributed by glutamine 35. The spermidine site is built by histidine 66 and aspartate 90. S-methyl-5'-thioadenosine is bound by residues aspartate 110 and 141-142 (DG). The active-site Proton acceptor is aspartate 160. 160–163 (DSTD) lines the spermidine pocket. Proline 167 serves as a coordination point for S-methyl-5'-thioadenosine.

Belongs to the spermidine/spermine synthase family. As to quaternary structure, homodimer or homotetramer.

The protein resides in the cytoplasm. The enzyme catalyses S-adenosyl 3-(methylsulfanyl)propylamine + putrescine = S-methyl-5'-thioadenosine + spermidine + H(+). It functions in the pathway amine and polyamine biosynthesis; spermidine biosynthesis; spermidine from putrescine: step 1/1. Catalyzes the irreversible transfer of a propylamine group from the amino donor S-adenosylmethioninamine (decarboxy-AdoMet) to putrescine (1,4-diaminobutane) to yield spermidine. This chain is Polyamine aminopropyltransferase, found in Methylococcus capsulatus (strain ATCC 33009 / NCIMB 11132 / Bath).